Here is a 614-residue protein sequence, read N- to C-terminus: Putative binding protein BMEII0691 (614 aa).

The signal sequence occupies residues 1–28 (MNRFIAFFRSVFLIGLVATAFGALPARA).

Belongs to the bacterial solute-binding protein 5 family.

It is found in the periplasm. The polypeptide is Putative binding protein BMEII0691 (Brucella melitensis biotype 1 (strain ATCC 23456 / CCUG 17765 / NCTC 10094 / 16M)).